A 397-amino-acid polypeptide reads, in one-letter code: Subtilisin-like protease 3 (397 aa).

Residues 1 to 19 (MGCIKVISVFLAAVAAVDA) form the signal peptide. Residues 20–116 (RAFFHNRGGN…VEHDRVVKLA (97 aa)) constitute a propeptide that is removed on maturation. The 82-residue stretch at 35–116 (SYIVVMKDGV…VEHDRVVKLA (82 aa)) folds into the Inhibitor I9 domain. Residues 126–397 (TWGLGRVSHK…NKLLYNGSGR (272 aa)) enclose the Peptidase S8 domain. Residues aspartate 158 and histidine 189 each act as charge relay system in the active site. Asparagine 250 is a glycosylation site (N-linked (GlcNAc...) asparagine). The active-site Charge relay system is the serine 344. N-linked (GlcNAc...) asparagine glycosylation is present at asparagine 393.

It belongs to the peptidase S8 family.

Its subcellular location is the secreted. Its function is as follows. Secreted subtilisin-like serine protease with keratinolytic activity that contributes to pathogenicity. The protein is Subtilisin-like protease 3 (SUB3) of Arthroderma otae (strain ATCC MYA-4605 / CBS 113480) (Microsporum canis).